The chain runs to 691 residues: Ubiquitin-like domain-containing protein CIP73 (691 aa).

Positions isoleucine 22–leucine 97 constitute a Ubiquitin-like domain. Disordered regions lie at residues alanine 92–glycine 118, threonine 176–aspartate 203, arginine 264–serine 283, alanine 432–alanine 473, serine 499–valine 554, glutamate 590–valine 624, and histidine 645–glutamate 691. 5 stretches are compositionally biased toward polar residues: residues proline 104 to glycine 118, leucine 178 to serine 189, serine 273 to serine 283, threonine 446 to serine 465, and serine 499 to glutamate 523. Residues threonine 525–alanine 535 are compositionally biased toward basic and acidic residues. A compositionally biased stretch (polar residues) spans arginine 536 to valine 554. Residues serine 597–alanine 617 are compositionally biased toward low complexity.

In terms of assembly, interacts with CCAMK. In terms of processing, phosphorylated at the N-terminus by CCAMK. Highly epressed in roots. Expressed at very low levels in leaves and stems.

Its subcellular location is the nucleus. Its function is as follows. Involved in root nodulation. Required for root nodule organogenesis after infection by symbiotic rhizobia. Probably not involved in arbuscular mycorrhizal (AM) symbiosis. Acts downstream of CCAMK. This is Ubiquitin-like domain-containing protein CIP73 from Lotus japonicus (Lotus corniculatus var. japonicus).